Here is a 569-residue protein sequence, read N- to C-terminus: Urease subunit alpha (569 aa).

Residues 131–569 (GSIDTHIHFI…VPMAQRYFLL (439 aa)) enclose the Urease domain. Ni(2+) contacts are provided by histidine 136, histidine 138, and lysine 219. Lysine 219 carries the N6-carboxylysine modification. A substrate-binding site is contributed by histidine 221. 2 residues coordinate Ni(2+): histidine 248 and histidine 274. The Proton donor role is filled by histidine 322. Residue aspartate 362 participates in Ni(2+) binding.

It belongs to the metallo-dependent hydrolases superfamily. Urease alpha subunit family. As to quaternary structure, heterotrimer of UreA (gamma), UreB (beta) and UreC (alpha) subunits. Three heterotrimers associate to form the active enzyme. It depends on Ni cation as a cofactor. Carboxylation allows a single lysine to coordinate two nickel ions.

It is found in the cytoplasm. It carries out the reaction urea + 2 H2O + H(+) = hydrogencarbonate + 2 NH4(+). It functions in the pathway nitrogen metabolism; urea degradation; CO(2) and NH(3) from urea (urease route): step 1/1. The polypeptide is Urease subunit alpha (Prochlorococcus marinus (strain MIT 9301)).